The primary structure comprises 185 residues: Large ribosomal subunit protein eL19 (185 aa).

Residues 152–185 form a disordered region; sequence SDKLTSQQEARRAKNTASRAKRNEKAQIVAKVDV.

This sequence belongs to the eukaryotic ribosomal protein eL19 family.

The sequence is that of Large ribosomal subunit protein eL19 (RPL19) from Tetrahymena thermophila (strain SB210).